We begin with the raw amino-acid sequence, 227 residues long: Thymidylate kinase (227 aa).

16 to 23 contacts ATP; the sequence is GIDGAGKT.

Belongs to the thymidylate kinase family.

The catalysed reaction is dTMP + ATP = dTDP + ADP. In terms of biological role, phosphorylation of dTMP to form dTDP in both de novo and salvage pathways of dTTP synthesis. The sequence is that of Thymidylate kinase from Xanthomonas campestris pv. campestris (strain 8004).